The primary structure comprises 845 residues: G-type lectin S-receptor-like serine/threonine-protein kinase At1g11410 (845 aa).

The first 21 residues, methionine 1–serine 21, serve as a signal peptide directing secretion. In terms of domain architecture, Bulb-type lectin spans aspartate 22–phenylalanine 147. The Extracellular segment spans residues aspartate 22–arginine 441. N-linked (GlcNAc...) asparagine glycosylation is found at asparagine 82, asparagine 103, asparagine 185, asparagine 231, and asparagine 259. Residues proline 283–arginine 321 form the EGF-like domain. 2 disulfides stabilise this stretch: cysteine 287–cysteine 299 and cysteine 293–cysteine 309. The PAN domain maps to cysteine 341 to aspartate 424. 3 N-linked (GlcNAc...) asparagine glycosylation sites follow: asparagine 357, asparagine 366, and asparagine 379. 2 disulfide bridges follow: cysteine 372–cysteine 399 and cysteine 376–cysteine 382. A helical transmembrane segment spans residues leucine 442–cysteine 462. At tyrosine 463 to arginine 845 the chain is on the cytoplasmic side. Residues phenylalanine 523–phenylalanine 808 enclose the Protein kinase domain. ATP-binding positions include leucine 529 to valine 537 and lysine 551. The tract at residues glutamate 612–isoleucine 629 is caM-binding. Aspartate 648 functions as the Proton acceptor in the catalytic mechanism. Residues proline 803 to arginine 845 form a disordered region. A compositionally biased stretch (polar residues) spans lysine 817–arginine 845.

It belongs to the protein kinase superfamily. Ser/Thr protein kinase family.

The protein localises to the cell membrane. The enzyme catalyses L-seryl-[protein] + ATP = O-phospho-L-seryl-[protein] + ADP + H(+). The catalysed reaction is L-threonyl-[protein] + ATP = O-phospho-L-threonyl-[protein] + ADP + H(+). The polypeptide is G-type lectin S-receptor-like serine/threonine-protein kinase At1g11410 (Arabidopsis thaliana (Mouse-ear cress)).